The chain runs to 625 residues: Phosphomethylpyrimidine synthase (625 aa).

Substrate-binding positions include Asn-231, Met-260, Tyr-289, His-325, 345 to 347 (SRG), 386 to 389 (DGLR), and Glu-425. A Zn(2+)-binding site is contributed by His-429. Tyr-452 lines the substrate pocket. A Zn(2+)-binding site is contributed by His-493. The [4Fe-4S] cluster site is built by Cys-573, Cys-576, and Cys-581.

Belongs to the ThiC family. As to quaternary structure, homodimer. Requires [4Fe-4S] cluster as cofactor.

It carries out the reaction 5-amino-1-(5-phospho-beta-D-ribosyl)imidazole + S-adenosyl-L-methionine = 4-amino-2-methyl-5-(phosphooxymethyl)pyrimidine + CO + 5'-deoxyadenosine + formate + L-methionine + 3 H(+). It participates in cofactor biosynthesis; thiamine diphosphate biosynthesis. In terms of biological role, catalyzes the synthesis of the hydroxymethylpyrimidine phosphate (HMP-P) moiety of thiamine from aminoimidazole ribotide (AIR) in a radical S-adenosyl-L-methionine (SAM)-dependent reaction. The polypeptide is Phosphomethylpyrimidine synthase (Acinetobacter baumannii (strain SDF)).